A 227-amino-acid chain; its full sequence is GRF-interacting factor 1 (227 aa).

A disordered region spans residues 186-227; sequence RSGSGAKEGSTSLSVDVRGGTSSGAQSGDGEYLKVGTEEEGS.

This sequence belongs to the SS18 family. As to quaternary structure, interacts with several GRFs. Interacts with GRF10. Interacts with GRF1. As to expression, expressed in shoots, aerial roots, ears and tassels. Expressed in the shoot apical meristem (SAM), young leaf primordia, leaf margins, inflorescence meristem, floral meristem and spikelet meristem.

Transcription coactivator that plays a role in the regulation of meristematic function in leaves, stems and inflorescences. Regulates shoot architecture and meristem determinacy. Binds to the inflorescence architecture gene UB3 (unbranched3). Regulates the expression of several genes involved in inflorescence architecture. Component of a network formed by the microRNA396 (miRNA396), the GRFs and their interacting factors (GIFs) acting in the regulation of meristem function, at least partially through the control of cell proliferation. Associates with the core SWI/SNF chromatin-remodeling complex and specific GRFs to tightly regulate the transition between cell division and cell expansion in growing leaves. The polypeptide is GRF-interacting factor 1 (Zea mays (Maize)).